A 178-amino-acid polypeptide reads, in one-letter code: Large ribosomal subunit protein uL6 (178 aa).

This sequence belongs to the universal ribosomal protein uL6 family. In terms of assembly, part of the 50S ribosomal subunit.

Functionally, this protein binds to the 23S rRNA, and is important in its secondary structure. It is located near the subunit interface in the base of the L7/L12 stalk, and near the tRNA binding site of the peptidyltransferase center. The chain is Large ribosomal subunit protein uL6 from Streptococcus pneumoniae (strain ATCC 700669 / Spain 23F-1).